Reading from the N-terminus, the 160-residue chain is MTNLTLDVNIIDFPSIPVAMLPHRCRPELLNYSVAKFIMWRKETGLSPVNQSQTFGVAWDDPATTAPEAFRFDICGSVSEPIPDNRYGVSNGELTGGRYAVARHVGELDDISHTIWGIIRHWLPASGEKMRKAPILFHYTNLAEGVTEQRLETNVYVPLA.

Functionally, represses expression of mcbR. This is Probable transcriptional regulator YgiV (ygiV) from Escherichia coli O157:H7.